The primary structure comprises 92 residues: Co-chaperonin GroES (92 aa).

The protein belongs to the GroES chaperonin family. Heptamer of 7 subunits arranged in a ring. Interacts with the chaperonin GroEL.

It is found in the cytoplasm. In terms of biological role, together with the chaperonin GroEL, plays an essential role in assisting protein folding. The GroEL-GroES system forms a nano-cage that allows encapsulation of the non-native substrate proteins and provides a physical environment optimized to promote and accelerate protein folding. GroES binds to the apical surface of the GroEL ring, thereby capping the opening of the GroEL channel. The chain is Co-chaperonin GroES from Methanosarcina barkeri (strain Fusaro / DSM 804).